The sequence spans 517 residues: Zinc finger protein 215 (517 aa).

The 79-residue stretch at R48–V126 folds into the SCAN box domain. Residues V164 to F237 form the KRAB domain. 4 C2H2-type zinc fingers span residues Y379 to H401, Y407 to H429, Y462 to H484, and F490 to H512.

This sequence belongs to the krueppel C2H2-type zinc-finger protein family.

The protein localises to the nucleus. Its function is as follows. May be involved in transcriptional regulation. The protein is Zinc finger protein 215 (ZNF215) of Homo sapiens (Human).